A 497-amino-acid polypeptide reads, in one-letter code: MRAIFLVALALATMRESTAESLKLTKENFNETIAKSEIFLVKFYVDTCGYCQMLAPEWEKAANETIDNALMGEVDCHSQPELAANFSIRGYPTIILFRNGKEAEHYGGARTKDDIIKYIKANVGPAVTPASNAEEVTRAKEEHDVVCVGLTANNSTSLSTTLAEAAQSFRVSLKFFEAEPKLFPDEKPETIVVYRKGGEKEVYDGPMEVEKLTEFLQISRVAFGGEITPENYQYYSVIKRPVGWAMVKPNETASIELKESLTEVGKKMRSHMVVLWVNISKHPVWRDFGVPEDAKYPAFLAIHWGANYLHSTAEVVTRESLEKFILEFAAGRVEPTIKSLPVPEVETVDGKTTIVAKTMQKHLTSGKDMLILFFAPWCGHCKNFAPTFDKIAKEFDATDLIVAELDATANYVNSSTFTVTAFPTVFFVPNGGKPVVFEGERSFENVYEFVRKHVTTFKVSEKPANVTEEKKSEEENKSSKSNESNDSNESNVDKQDL.

A signal peptide spans 1-14 (MRAIFLVALALATM). Residues 15–124 (RESTAESLKL…IIKYIKANVG (110 aa)) enclose the Thioredoxin 1 domain. Residue Asn-30 is glycosylated (N-linked (GlcNAc...) asparagine). Cys-48 and Cys-51 are joined by a disulfide. N-linked (GlcNAc...) asparagine glycans are attached at residues Asn-63, Asn-85, Asn-153, Asn-154, Asn-250, and Asn-278. Positions 334 to 455 (EPTIKSLPVP…VYEFVRKHVT (122 aa)) constitute a Thioredoxin 2 domain. Residues Cys-378 and Cys-381 each act as nucleophile in the active site. Cys-378 and Cys-381 are disulfide-bonded. Residues Asn-413, Asn-465, Asn-476, Asn-482, Asn-485, and Asn-488 are each glycosylated (N-linked (GlcNAc...) asparagine). The interval 461–497 (EKPANVTEEKKSEEENKSSKSNESNDSNESNVDKQDL) is disordered. Residues 467 to 480 (TEEKKSEEENKSSK) show a composition bias toward basic and acidic residues. Positions 481–490 (SNESNDSNES) are enriched in low complexity.

It belongs to the protein disulfide isomerase family.

The polypeptide is Bloodstream-specific protein 2 (BS2) (Trypanosoma brucei brucei).